We begin with the raw amino-acid sequence, 370 residues long: MRVFTTGQLLGTVVAVQANFYKVQLDQEVREQGSRGAGEEVHLDSPLPLCPLSLLLCTRRTRLKKIGQQVMVGDRVVVEEPDWAGGRGAIADVLSRQTQLDRPPIANADQILLVFAVADPPLEPYQLSRFLVKAETTGLDVVLCLNKSDLVSPEIQQQISDRLLAWGYQPLFISVENQINIDQIAKYLSNKITVVAGPSGVGKSSLINALIPNINLRVGEVSGKLARGRHTTRHVELFELPNGGLLADTPGFNQPDVDCSPEELVHYFPEARERLAIASCRFNDCSHRDEPDCAVRGDWERYEHYLEFLADAIARQTQLYQQADPESTLKLKTKGKGQSQYEPKLESKKYRRTSRRTQVQGLQDLYQEEE.

In terms of domain architecture, CP-type G spans 97 to 255 (QTQLDRPPIA…LADTPGFNQP (159 aa)). GTP is bound by residues 146–149 (NKSD) and 197–205 (GPSGVGKSS). Zn(2+) contacts are provided by Cys-280, Cys-285, His-287, and Cys-293. Residues 325–370 (PESTLKLKTKGKGQSQYEPKLESKKYRRTSRRTQVQGLQDLYQEEE) form a disordered region.

It belongs to the TRAFAC class YlqF/YawG GTPase family. RsgA subfamily. Monomer. Associates with 30S ribosomal subunit, binds 16S rRNA. Requires Zn(2+) as cofactor.

Its subcellular location is the cytoplasm. Its function is as follows. One of several proteins that assist in the late maturation steps of the functional core of the 30S ribosomal subunit. Helps release RbfA from mature subunits. May play a role in the assembly of ribosomal proteins into the subunit. Circularly permuted GTPase that catalyzes slow GTP hydrolysis, GTPase activity is stimulated by the 30S ribosomal subunit. The protein is Small ribosomal subunit biogenesis GTPase RsgA 1 of Nostoc sp. (strain PCC 7120 / SAG 25.82 / UTEX 2576).